The primary structure comprises 797 residues: Methionine--tRNA ligase, cytoplasmic (797 aa).

The short motif at 26–36 is the 'HIGH' region element; the sequence is PYVNNVPHLGN. Positions 348–352 match the 'KMSKS' region motif; that stretch reads KFSKS. Lysine 351 lines the ATP pocket. Positions 601-634 are disordered; sequence DQLNKTKLSDAKKQKASSKGGGKPKPQPAADREI. Residues 635–738 form the tRNA-binding domain; it reads TMARLDIRVG…KTANIGERVT (104 aa).

It belongs to the class-I aminoacyl-tRNA synthetase family.

It localises to the cytoplasm. It is found in the cytosol. It catalyses the reaction tRNA(Met) + L-methionine + ATP = L-methionyl-tRNA(Met) + AMP + diphosphate. This is Methionine--tRNA ligase, cytoplasmic from Arabidopsis thaliana (Mouse-ear cress).